A 336-amino-acid polypeptide reads, in one-letter code: Biotin synthase (336 aa).

Residues 52–279 form the Radical SAM core domain; the sequence is KAIQLSTLMS…KSYVRLSAGR (228 aa). Residues Cys-67, Cys-71, and Cys-74 each coordinate [4Fe-4S] cluster. Cys-111, Cys-142, Cys-202, and Arg-274 together coordinate [2Fe-2S] cluster.

Belongs to the radical SAM superfamily. Biotin synthase family. Homodimer. [4Fe-4S] cluster is required as a cofactor. It depends on [2Fe-2S] cluster as a cofactor.

The enzyme catalyses (4R,5S)-dethiobiotin + (sulfur carrier)-SH + 2 reduced [2Fe-2S]-[ferredoxin] + 2 S-adenosyl-L-methionine = (sulfur carrier)-H + biotin + 2 5'-deoxyadenosine + 2 L-methionine + 2 oxidized [2Fe-2S]-[ferredoxin]. The protein operates within cofactor biosynthesis; biotin biosynthesis; biotin from 7,8-diaminononanoate: step 2/2. Catalyzes the conversion of dethiobiotin (DTB) to biotin by the insertion of a sulfur atom into dethiobiotin via a radical-based mechanism. The sequence is that of Biotin synthase from Pasteurella multocida (strain Pm70).